A 327-amino-acid polypeptide reads, in one-letter code: Pyruvate dehydrogenase E1 component subunit beta (327 aa).

E60 contributes to the thiamine diphosphate binding site. Residues V113, A161, I162, and E164 each contribute to the K(+) site.

In terms of assembly, heterodimer of an alpha and a beta chain. Thiamine diphosphate serves as cofactor.

It is found in the plastid. The protein resides in the chloroplast. The enzyme catalyses N(6)-[(R)-lipoyl]-L-lysyl-[protein] + pyruvate + H(+) = N(6)-[(R)-S(8)-acetyldihydrolipoyl]-L-lysyl-[protein] + CO2. Functionally, the pyruvate dehydrogenase complex catalyzes the overall conversion of pyruvate to acetyl-CoA and CO(2). It contains multiple copies of three enzymatic components: pyruvate dehydrogenase (E1), dihydrolipoamide acetyltransferase (E2) and lipoamide dehydrogenase (E3). This is Pyruvate dehydrogenase E1 component subunit beta (pdhB) from Cyanidium caldarium (Red alga).